The following is a 788-amino-acid chain: METLLGGLLAFGMAFAVVDACPKYCVCQNLSESLGTLCPSKGLLFVPPDIDRRTVELRLGGNFIIHIGRQDFANMTGLVDLTLSRNTISHIQPFSFLDLESLRSLHLDSNRLPSLGEDTLRGLVNLQHLIVNNNQLGGIADDAFEDFLLTLEDLDLSYNNLHGLPWDSVRRMVNLHQLSLDHNLLDHIAEGTFADLQKLARLDLTSNRLQKLPPDPIFARSQASLLTATPFAPPLSFSFGGNPLHCNCELLWLRRLERDDDLKTCGSPGGLKGRYFWHIREEEFVCEPPLITQHTHKLLVLEGQAATLKCKAIGDPSPLIHWVAPDDRLVGNSSRTAVYDNGTLDILITTSQDSGPFTCIAANAAGEATATVEVSIVQLPHLSNSTSRMAPPKSRLSDITGSSKTSRGGGGSGAGEPPKSTPERAVLVSDVTTTSALVKWSVSKSAPRVKMYQLQYNCSDDEVLIYRMIPASNKAFVVNNLVSGTGYDLCVLAMWDDTATTLTATNIVGCAQFFTKADYPQCQSMHSQILGGTMILVIGGIIVATLLVFIVILMVRYKVCNHDAPGKMAAATVSNVYSQTNGAQPPPLGGMPVGQLPQAPPKVVVRNELMDFSTSLARACDSSSSSSLGSGEAAGLSRGPWRLPPPAPRPKPSLDRLMGAFASLDLKSQRKEELLDSRTPAGRGAGTSARGHHSDREPLLGPPATRARSLLPLPLEGKAKRSHSFDMGDFAAAAAAAPGGYSPPRRVSNIWTKRSLSVNGMLLPFEENDLVGARGTFGSSEWVMESTV.

The N-terminal stretch at 1-20 (METLLGGLLAFGMAFAVVDA) is a signal peptide. An LRRNT domain is found at 21-52 (CPKYCVCQNLSESLGTLCPSKGLLFVPPDIDR). Over 21 to 534 (CPKYCVCQNL…MHSQILGGTM (514 aa)) the chain is Extracellular. Residues Asn-29 and Asn-74 are each glycosylated (N-linked (GlcNAc...) asparagine). 7 LRR repeats span residues 53-74 (RTVELRLGGNFIIHIGRQDFAN), 77-98 (GLVDLTLSRNTISHIQPFSFLD), 101-122 (SLRSLHLDSNRLPSLGEDTLRG), 125-146 (NLQHLIVNNNQLGGIADDAFED), 150-171 (TLEDLDLSYNNLHGLPWDSVRR), 174-195 (NLHQLSLDHNLLDHIAEGTFAD), and 198-219 (KLARLDLTSNRLQKLPPDPIFA). Residues 242–288 (NPLHCNCELLWLRRLERDDDLKTCGSPGGLKGRYFWHIREEEFVCEP) form the LRRCT domain. Residues 289–375 (PLITQHTHKL…GEATATVEVS (87 aa)) form the Ig-like domain. Cys-310 and Cys-359 are joined by a disulfide. N-linked (GlcNAc...) asparagine glycans are attached at residues Asn-332, Asn-341, Asn-384, and Asn-457. The disordered stretch occupies residues 383 to 423 (SNSTSRMAPPKSRLSDITGSSKTSRGGGGSGAGEPPKSTPE). Positions 422-518 (PERAVLVSDV…GCAQFFTKAD (97 aa)) constitute a Fibronectin type-III domain. A helical membrane pass occupies residues 535–555 (ILVIGGIIVATLLVFIVILMV). Residues 556–788 (RYKVCNHDAP…SSEWVMESTV (233 aa)) lie on the Cytoplasmic side of the membrane. A compositionally biased stretch (low complexity) spans 620–641 (CDSSSSSSLGSGEAAGLSRGPW). Disordered stretches follow at residues 620–655 (CDSSSSSSLGSGEAAGLSRGPWRLPPPAPRPKPSLD) and 668–707 (SQRKEELLDSRTPAGRGAGTSARGHHSDREPLLGPPATRA). The segment covering 642 to 651 (RLPPPAPRPK) has biased composition (pro residues). Residues 785-788 (ESTV) carry the PDZ-binding motif.

It belongs to the LRFN family. In terms of assembly, forms heteromeric complexes with LRFN1, LRFN3 and LRFN4. Can form homomeric complexes, but not across cell junctions. Can form heteromeric complexes with LRFN5. Interacts with DLG1, DLG3 and DLG4; interaction with DLG4 is mediated by the PDZ-binding domain. Also interacts with DLG2. Interacts with 2 NMDA receptor subunits GRIN1 and GRIN2A.

The protein localises to the membrane. It is found in the synapse. Its subcellular location is the postsynaptic cell membrane. In terms of biological role, promotes neurite outgrowth in hippocampal neurons. Enhances the cell surface expression of GRIN1 and GRIN2A NMDA receptor subunits. May play a role in redistributing DLG4 to the cell periphery. The chain is Leucine-rich repeat and fibronectin type-III domain-containing protein 2 (Lrfn2) from Rattus norvegicus (Rat).